A 57-amino-acid polypeptide reads, in one-letter code: Large ribosomal subunit protein bL32c (57 aa).

It belongs to the bacterial ribosomal protein bL32 family.

It localises to the plastid. The protein resides in the chloroplast. The protein is Large ribosomal subunit protein bL32c of Drimys granadensis.